The primary structure comprises 210 residues: Probable GTP-binding protein EngB (210 aa).

Positions 30 to 204 (QGYEVAFAGR…YKVLAGWMEL (175 aa)) constitute an EngB-type G domain. Residues 38 to 45 (GRSNAGKS), 64 to 68 (GRTQL), 82 to 85 (DLPG), 149 to 152 (TKAD), and 182 to 185 (LFSA) each bind GTP. S45 and T66 together coordinate Mg(2+).

This sequence belongs to the TRAFAC class TrmE-Era-EngA-EngB-Septin-like GTPase superfamily. EngB GTPase family. Mg(2+) is required as a cofactor.

Its function is as follows. Necessary for normal cell division and for the maintenance of normal septation. This chain is Probable GTP-binding protein EngB, found in Pseudomonas putida (strain W619).